A 161-amino-acid polypeptide reads, in one-letter code: Phosphopantetheine adenylyltransferase (161 aa).

Ser-9 lines the substrate pocket. Residues 9–10 (SF) and His-17 each bind ATP. Substrate is bound by residues Lys-41, Leu-73, and Lys-87. ATP is bound by residues 88 to 90 (GLR), Glu-98, and 123 to 129 (YSYLSSS).

Belongs to the bacterial CoaD family. Homohexamer. Mg(2+) serves as cofactor.

The protein localises to the cytoplasm. It carries out the reaction (R)-4'-phosphopantetheine + ATP + H(+) = 3'-dephospho-CoA + diphosphate. It participates in cofactor biosynthesis; coenzyme A biosynthesis; CoA from (R)-pantothenate: step 4/5. Its function is as follows. Reversibly transfers an adenylyl group from ATP to 4'-phosphopantetheine, yielding dephospho-CoA (dPCoA) and pyrophosphate. The sequence is that of Phosphopantetheine adenylyltransferase from Clostridium novyi (strain NT).